The sequence spans 331 residues: UDP-GalNAc:beta-1,3-N-acetylgalactosaminyltransferase 1 (331 aa).

At 1-20 (MASALWTVLPSRMSLRSLKW) the chain is on the cytoplasmic side. A helical; Signal-anchor for type II membrane protein membrane pass occupies residues 21–43 (SLLLLSLLSFFVMWYLSLPHYNV). Over 44 to 331 (IERVNWMYFY…VMLRNTTCHY (288 aa)) the chain is Lumenal. 5 N-linked (GlcNAc...) asparagine glycosylation sites follow: Asn-72, Asn-154, Asn-198, Asn-212, and Asn-326.

The protein belongs to the glycosyltransferase 31 family. Mg(2+) is required as a cofactor. In terms of tissue distribution, higher expression in heart and brain, and to a lesser extent in lung, placenta, kidney and testis. Lower expression in liver, spleen and stomach. No expression in skeletal muscle.

It is found in the golgi apparatus membrane. It carries out the reaction a globoside Gb3Cer (d18:1(4E)) + UDP-N-acetyl-alpha-D-galactosamine = a globoside Gb4Cer (d18:1(4E)) + UDP + H(+). It participates in protein modification; protein glycosylation. Transfers N-acetylgalactosamine onto globotriaosylceramide. Plays a critical role in preimplantation stage embryonic development. The protein is UDP-GalNAc:beta-1,3-N-acetylgalactosaminyltransferase 1 of Homo sapiens (Human).